A 74-amino-acid chain; its full sequence is Lantibiotic lichenicidin A1 (74 aa).

Positions 1–42 are excised as a propeptide; sequence MSKKEMILSWKNPMYRTESSYHPAGNILKELQEEEQHSIAGG. Position 43 is a 2-oxobutanoic acid (Thr-43). The beta-methyllanthionine (Thr-Cys) cross-link spans 45–49; that stretch reads TLSTC. The residue at position 47 (Ser-47) is a 2,3-didehydroalanine (Ser). The residue at position 48 (Thr-48) is a (Z)-2,3-didehydrobutyrine. The lanthionine (Ser-Cys) cross-link spans 53 to 63; the sequence is SKPLGNNGYLC. Cross-links (beta-methyllanthionine (Thr-Cys)) lie at residues 64 to 69 and 66 to 73; these read TVTKEC and TKECMPSC.

Post-translationally, maturation of lantibiotics involves the enzymatic conversion of Thr, and Ser into dehydrated AA and the formation of thioether bonds with cysteine. This is followed by membrane translocation and cleavage of the modified precursor.

The protein localises to the secreted. Its subcellular location is the cell wall. In terms of biological role, lanthionine-containing peptide antibiotic (lantibiotic) active on Gram-positive bacteria. The bactericidal activity of lantibiotics is based on depolarization of energized bacterial cytoplasmic membranes, initiated by the formation of aqueous transmembrane pores. When present individually, LchA1 exhibits activity towards L.lactis HP. When combined with LchA2, it displays activity towards a broad spectrum of non-pathogenic and pathogenic Gram-positive bacteria including strains of L.monocytogenes, methicillin-resistant S.aureus, S.pneumoniae and strains of vancomycin-resistant enterococci, but not towards E.faecium L4001 and BM4147-1. Combined LchA1 and LchA2 peptides also inhibit Bacillus sp. HIL-Y85/54728, L.lactis DPC3417 and B.halodurans C-125, which produce lantibiotics themselves. Inactivated by proteinase K and pronase E, but not by trypsin and chymotrypsin. This is Lantibiotic lichenicidin A1 from Bacillus licheniformis (strain ATCC 14580 / DSM 13 / JCM 2505 / CCUG 7422 / NBRC 12200 / NCIMB 9375 / NCTC 10341 / NRRL NRS-1264 / Gibson 46).